The following is an 852-amino-acid chain: DNA mismatch repair protein MutS (852 aa).

602–609 is an ATP binding site; that stretch reads GPNMSGKS.

It belongs to the DNA mismatch repair MutS family.

In terms of biological role, this protein is involved in the repair of mismatches in DNA. It is possible that it carries out the mismatch recognition step. This protein has a weak ATPase activity. This is DNA mismatch repair protein MutS from Streptococcus thermophilus (strain ATCC BAA-491 / LMD-9).